The sequence spans 121 residues: Small ribosomal subunit protein bS6m (121 aa).

The protein belongs to the bacterial ribosomal protein bS6 family. Component of the mitochondrial ribosome small subunit (28S) which comprises a 12S rRNA and about 30 distinct proteins.

It is found in the mitochondrion. The chain is Small ribosomal subunit protein bS6m (MRPS6) from Gallus gallus (Chicken).